The sequence spans 318 residues: Methionyl-tRNA formyltransferase (318 aa).

Residue 112–115 participates in (6S)-5,6,7,8-tetrahydrofolate binding; it reads SILP.

The protein belongs to the Fmt family.

The enzyme catalyses L-methionyl-tRNA(fMet) + (6R)-10-formyltetrahydrofolate = N-formyl-L-methionyl-tRNA(fMet) + (6S)-5,6,7,8-tetrahydrofolate + H(+). Functionally, attaches a formyl group to the free amino group of methionyl-tRNA(fMet). The formyl group appears to play a dual role in the initiator identity of N-formylmethionyl-tRNA by promoting its recognition by IF2 and preventing the misappropriation of this tRNA by the elongation apparatus. The polypeptide is Methionyl-tRNA formyltransferase (Shewanella baltica (strain OS155 / ATCC BAA-1091)).